Consider the following 785-residue polypeptide: Endonuclease MutS2 (785 aa).

335–342 (GPNTGGKT) provides a ligand contact to ATP. A Smr domain is found at 710–785 (LDLRGERYED…GNGVTIVEFK (76 aa)).

It belongs to the DNA mismatch repair MutS family. MutS2 subfamily. As to quaternary structure, homodimer. Binds to stalled ribosomes, contacting rRNA.

Functionally, endonuclease that is involved in the suppression of homologous recombination and thus may have a key role in the control of bacterial genetic diversity. Its function is as follows. Acts as a ribosome collision sensor, splitting the ribosome into its 2 subunits. Detects stalled/collided 70S ribosomes which it binds and splits by an ATP-hydrolysis driven conformational change. Acts upstream of the ribosome quality control system (RQC), a ribosome-associated complex that mediates the extraction of incompletely synthesized nascent chains from stalled ribosomes and their subsequent degradation. Probably generates substrates for RQC. This chain is Endonuclease MutS2, found in Listeria innocua serovar 6a (strain ATCC BAA-680 / CLIP 11262).